Reading from the N-terminus, the 374-residue chain is Alcohol dehydrogenase 1 (374 aa).

Residue Ser1 is modified to N-acetylserine. Residues Cys46, His67, Cys97, Cys100, Cys103, Cys111, and Cys174 each contribute to the Zn(2+) site. Residues 199–204, Asp223, Lys228, 292–294, and Arg369 contribute to the NAD(+) site; these read GLGGVG and VGV.

This sequence belongs to the zinc-containing alcohol dehydrogenase family. Class-I subfamily. In terms of assembly, homodimer. Zn(2+) serves as cofactor.

The protein localises to the cytoplasm. The enzyme catalyses a primary alcohol + NAD(+) = an aldehyde + NADH + H(+). It catalyses the reaction a secondary alcohol + NAD(+) = a ketone + NADH + H(+). The sequence is that of Alcohol dehydrogenase 1 (ADH1) from Struthio camelus (Common ostrich).